Reading from the N-terminus, the 370-residue chain is Doublesex- and mab-3-related transcription factor C2 (370 aa).

The tract at residues methionine 1–arginine 38 is disordered. Positions cysteine 42–arginine 89 form a DNA-binding region, DM. Positions alanine 334–valine 356 are disordered.

The protein belongs to the DMRT family. As to expression, expressed in testis. Highly expressed in ovary.

It localises to the nucleus. Functionally, may be involved in sexual development. This is Doublesex- and mab-3-related transcription factor C2 (Dmrtc2) from Mus musculus (Mouse).